Here is a 534-residue protein sequence, read N- to C-terminus: (E)-beta-farnesene synthase (534 aa).

Mg(2+) contacts are provided by D287, D291, N431, S435, and E439. The DDXXD motif signature appears at D287–D291.

It belongs to the terpene synthase family. Mg(2+) is required as a cofactor. Co(2+) serves as cofactor. It depends on Mn(2+) as a cofactor.

The protein resides in the cytoplasm. It carries out the reaction (2E,6E)-farnesyl diphosphate = (E)-beta-farnesene + diphosphate. It functions in the pathway secondary metabolite biosynthesis; terpenoid biosynthesis. In terms of biological role, sesquiterpene cyclase catalyzing the production of beta-farnesene and alpha-bergamotene in equal amounts from farnesyl diphosphate. Involved in indirect defense by producing volatile signals attracting natural enemies of herbivores. This chain is (E)-beta-farnesene synthase, found in Zea mays subsp. mexicana (Mexican teosinte).